Reading from the N-terminus, the 309-residue chain is Pyrroline-5-carboxylate reductase 1, mitochondrial (309 aa).

The residue at position 2 (Ser2) is an N-acetylserine. Residues 6-11 (IGAGQL) and Ser34 contribute to the NADP(+) site. NADPH is bound by residues Ala8, Gln10, Leu11, Ser34, Asp36, Asn56, Val70, Lys71, and Ala97. NADP(+) contacts are provided by residues Asn56, 69-72 (AVKP), and 95-97 (CAA). Glu164 is a binding site for L-proline. Asn230 lines the NADPH pocket. Residues Ala237 and Thr238 each contribute to the L-proline site. 2 positions are modified to phosphoserine: Ser278 and Ser301.

The protein belongs to the pyrroline-5-carboxylate reductase family. As to quaternary structure, homodecamer; composed of 5 homodimers. Interacts with LTO1. In terms of tissue distribution, highly expressed in osteoblasts and skin.

The protein localises to the mitochondrion. The enzyme catalyses L-proline + NADP(+) = (S)-1-pyrroline-5-carboxylate + NADPH + 2 H(+). It carries out the reaction L-proline + NAD(+) = (S)-1-pyrroline-5-carboxylate + NADH + 2 H(+). It functions in the pathway amino-acid biosynthesis; L-proline biosynthesis; L-proline from L-glutamate 5-semialdehyde: step 1/1. In terms of biological role, oxidoreductase that catalyzes the last step in proline biosynthesis, which corresponds to the reduction of pyrroline-5-carboxylate to L-proline using NAD(P)H. At physiologic concentrations, has higher specific activity in the presence of NADH. Involved in the cellular response to oxidative stress. In Mus musculus (Mouse), this protein is Pyrroline-5-carboxylate reductase 1, mitochondrial.